The sequence spans 435 residues: Methionine aminopeptidase 2-2 (435 aa).

Residues 1-92 (MAAQTTEKLQ…VPVSNLFPNN (92 aa)) form a disordered region. The span at 24-33 (DAPAAGQAEA) shows a compositional bias: low complexity. The span at 34 to 45 (GEAEEDSDDEKD) shows a compositional bias: acidic residues. A compositionally biased stretch (basic residues) spans 59 to 73 (AKKKKRKSKKKKKGG). His-197 is a substrate binding site. A divalent metal cation-binding residues include Asp-217, Asp-228, and His-297. His-305 is a substrate binding site. Positions 330 and 425 each coordinate a divalent metal cation.

Belongs to the peptidase M24A family. Methionine aminopeptidase eukaryotic type 2 subfamily. Co(2+) is required as a cofactor. The cofactor is Zn(2+). Requires Mn(2+) as cofactor. Fe(2+) serves as cofactor.

It localises to the cytoplasm. The enzyme catalyses Release of N-terminal amino acids, preferentially methionine, from peptides and arylamides.. In terms of biological role, cotranslationally removes the N-terminal methionine from nascent proteins. The N-terminal methionine is often cleaved when the second residue in the primary sequence is small and uncharged (Met-Ala-, Cys, Gly, Pro, Ser, Thr, or Val). This Aspergillus clavatus (strain ATCC 1007 / CBS 513.65 / DSM 816 / NCTC 3887 / NRRL 1 / QM 1276 / 107) protein is Methionine aminopeptidase 2-2.